We begin with the raw amino-acid sequence, 1285 residues long: ABC-type transporter fsqE (1285 aa).

In terms of domain architecture, ABC transmembrane type-1 1 spans Val54–Ser343. The next 6 helical transmembrane spans lie at Ile57–Val77, Leu102–Phe122, Leu176–Met196, Ile203–Val223, Val281–Trp301, and Met312–Ile332. The region spanning Leu380–Lys622 is the ABC transporter 1 domain. Gly413 to Ser420 serves as a coordination point for ATP. N-linked (GlcNAc...) asparagine glycosylation occurs at Asn467. The segment at Asp627–Asn654 is disordered. 6 consecutive transmembrane segments (helical) span residues Leu707–Phe727, Gly753–Leu773, Gly831–Trp851, Leu855–Leu875, Ile931–Leu951, and Phe968–Phe988. Residues Ala713 to Lys996 enclose the ABC transmembrane type-1 2 domain. A glycan (N-linked (GlcNAc...) asparagine) is linked at Asn1037. In terms of domain architecture, ABC transporter 2 spans Val1043–Met1281. Residue Gly1078–Ser1085 participates in ATP binding. Asn1138 carries an N-linked (GlcNAc...) asparagine glycan.

This sequence belongs to the ABC transporter superfamily. ABCB family. Multidrug resistance exporter (TC 3.A.1.201) subfamily.

It is found in the membrane. Its pathway is secondary metabolite biosynthesis. ABC-type transporter; part of the gene cluster that mediates the biosynthesis of the isoquinoline alkaloids fumisoquin A, fumisoquin B and fumisoquin C; as well as small amounts of fumipyrrole as a shunt metabolite. The products of the cluster lead to a brown coloration and are important for growth and conidiation. FsqE possibly plays a role of self-protection. This is ABC-type transporter fsqE from Aspergillus fumigatus (strain ATCC MYA-4609 / CBS 101355 / FGSC A1100 / Af293) (Neosartorya fumigata).